A 431-amino-acid polypeptide reads, in one-letter code: MSSSRSGLTRVLVAVATALVSSSTPCPQAWGPPGVQYGQPGRPVMLCCPGVNAGTPVSWFRDGDSRLLQGPDSGLGHRLVLAQVDSRDEGTYVCRTLDGVFGGMVTLKLGSPPARPEVSCQAVDYENFSCTWSPGRVSGLPTRYLTSYRKKTLPGAESQRESPSTGPWPCPQDPLEASRCVVHGAEFWSEYRINVTEVNPLGASTCLLDVRLQRILRPDPPQGLRVESVPGYPRRLHASWTYPASWRRQPHFLLKFRLQYRPAQHPAWSTVEPIGLEELITDAVAGLPHAVRVSARDFLDAGTWSAWSPEAWGTPSTGPLRDEVPDGSRGHEQKLEAAAQEDSPAPPSPSLQPDPRPLDHRDPLEQVAVLASLGIFSFLGLAVGALALGLWLRLRRSGKDGPQKPGFLAPMIPGDKLPGIPNLQRTPENFS.

The first 23 residues, 1 to 23 (MSSSRSGLTRVLVAVATALVSSS), serve as a signal peptide directing secretion. Residues 24-371 (TPCPQAWGPP…DPLEQVAVLA (348 aa)) are Extracellular-facing. In terms of domain architecture, Ig-like C2-type spans 27–110 (PQAWGPPGVQ…FGGMVTLKLG (84 aa)). Disulfide bonds link C48/C94, C120/C130, and C170/C180. 2 consecutive Fibronectin type-III domains span residues 112–219 (PPAR…LRPD) and 220–317 (PPQG…TPST). Residue N127 is glycosylated (N-linked (GlcNAc...) asparagine). Residues 151-170 (KTLPGAESQRESPSTGPWPC) form a disordered region. A glycan (N-linked (GlcNAc...) asparagine) is linked at N194. Positions 304-308 (WSAWS) match the WSXWS motif motif. The disordered stretch occupies residues 310 to 360 (EAWGTPSTGPLRDEVPDGSRGHEQKLEAAAQEDSPAPPSPSLQPDPRPLDH). A compositionally biased stretch (basic and acidic residues) spans 320–335 (LRDEVPDGSRGHEQKL). Pro residues predominate over residues 344 to 355 (PAPPSPSLQPDP). The chain crosses the membrane as a helical span at residues 372–392 (SLGIFSFLGLAVGALALGLWL). Over 393–431 (RLRRSGKDGPQKPGFLAPMIPGDKLPGIPNLQRTPENFS) the chain is Cytoplasmic. The interval 402–431 (PQKPGFLAPMIPGDKLPGIPNLQRTPENFS) is disordered.

It belongs to the type I cytokine receptor family. Type 3 subfamily. On IL11 binding, forms a multimer complex with IL6ST/gp130. In terms of processing, a short soluble form is also released from the membrane by proteolysis. The sIL11RA is formed either by limited proteolysis of membrane-bound receptors, a process referred to as ectodomain shedding, or directly secreted from the cells after alternative mRNA splicing. mIL11RA is cleaved by the proteases ADAM10, ELANE and PRTN3.

It localises to the membrane. Its subcellular location is the secreted. In terms of biological role, receptor for interleukin-11 (IL11). The receptor systems for IL6, LIF, OSM, CNTF, IL11 and CT1 can utilize IL6ST for initiating signal transmission. The IL11/IL11RA/IL6ST complex may be involved in the control of proliferation and/or differentiation of skeletogenic progenitor or other mesenchymal cells. Essential for the normal development of craniofacial bones and teeth. Restricts suture fusion and tooth number. Its function is as follows. Soluble form of IL11 receptor (sIL11RA) that acts as an agonist of IL11 activity. The IL11:sIL11RA complex binds to IL6ST/gp130 on cell surfaces and induces signaling also on cells that do not express membrane-bound IL11RA in a process called IL11 trans-signaling. This chain is Interleukin-11 receptor subunit alpha, found in Rattus norvegicus (Rat).